Reading from the N-terminus, the 240-residue chain is Ribonuclease HII (240 aa).

Residues Gly21–Val210 form the RNase H type-2 domain. Positions 27, 28, and 119 each coordinate a divalent metal cation.

Belongs to the RNase HII family. The cofactor is Mn(2+). It depends on Mg(2+) as a cofactor.

The protein localises to the cytoplasm. It carries out the reaction Endonucleolytic cleavage to 5'-phosphomonoester.. Its function is as follows. Endonuclease that specifically degrades the RNA of RNA-DNA hybrids. The protein is Ribonuclease HII of Paracidovorax citrulli (strain AAC00-1) (Acidovorax citrulli).